The sequence spans 253 residues: Phosphonates import ATP-binding protein PhnC (253 aa).

The region spanning 4–247 is the ABC transporter domain; that stretch reads VRFEGVTKRF…QAVAMIYRAG (244 aa). Residue 36-43 coordinates ATP; the sequence is GLSGSGKS.

The protein belongs to the ABC transporter superfamily. Phosphonates importer (TC 3.A.1.9.1) family. In terms of assembly, the complex is composed of two ATP-binding proteins (PhnC), two transmembrane proteins (PhnE) and a solute-binding protein (PhnD).

The protein resides in the cell membrane. The enzyme catalyses phosphonate(out) + ATP + H2O = phosphonate(in) + ADP + phosphate + H(+). Functionally, part of the ABC transporter complex PhnCDE involved in phosphonates import. Responsible for energy coupling to the transport system. The protein is Phosphonates import ATP-binding protein PhnC of Frankia casuarinae (strain DSM 45818 / CECT 9043 / HFP020203 / CcI3).